Consider the following 338-residue polypeptide: N-acetyl-gamma-glutamyl-phosphate reductase (338 aa).

Residue C148 is part of the active site.

The protein belongs to the NAGSA dehydrogenase family. Type 1 subfamily.

It localises to the cytoplasm. It carries out the reaction N-acetyl-L-glutamate 5-semialdehyde + phosphate + NADP(+) = N-acetyl-L-glutamyl 5-phosphate + NADPH + H(+). Its pathway is amino-acid biosynthesis; L-arginine biosynthesis; N(2)-acetyl-L-ornithine from L-glutamate: step 3/4. Functionally, catalyzes the NADPH-dependent reduction of N-acetyl-5-glutamyl phosphate to yield N-acetyl-L-glutamate 5-semialdehyde. This is N-acetyl-gamma-glutamyl-phosphate reductase from Leptospira borgpetersenii serovar Hardjo-bovis (strain JB197).